The chain runs to 225 residues: Uracil-DNA glycosylase 1 (225 aa).

Asp-68 functions as the Proton acceptor in the catalytic mechanism.

This sequence belongs to the uracil-DNA glycosylase (UDG) superfamily. UNG family.

The protein localises to the cytoplasm. It carries out the reaction Hydrolyzes single-stranded DNA or mismatched double-stranded DNA and polynucleotides, releasing free uracil.. Functionally, excises uracil residues from the DNA which can arise as a result of misincorporation of dUMP residues by DNA polymerase or due to deamination of cytosine. The protein is Uracil-DNA glycosylase 1 (ung1) of Streptomyces avermitilis (strain ATCC 31267 / DSM 46492 / JCM 5070 / NBRC 14893 / NCIMB 12804 / NRRL 8165 / MA-4680).